The primary structure comprises 1745 residues: MGNRRDLGQPRAGLCLLLAALQLLPGTQADPVDVLKALGVQGGQAGVPEGPGFCPQRTPEGDRAFRIGQASTLGIPTWELFPEGHFPENFSLLITLRGQPANQSVLLSIYDERGARQLGLALGPALGLLGDPFRPLPQQVNLTDGRWHRVAVSIDGEMVTLVADCEAQPPVLGHGPRFISIAGLTVLGTQDLGEKTFEGDIQELLISPDPQAAFQACERYLPDCDNLAPAATVAPQGEPETPRPRRKGKGKGRKKGRGRKGKGRKKNKEIWTSSPPPDSAENQTSTDIPKTETPAPNLPPTPTPLVVTSTVTTGLNATILERSLDPDSGTELGTLETKAAREDEEGDDSTMGPDFRAAEYPSRTQFQIFPGAGEKGAKGEPAVIEKGQQFEGPPGAPGPQGVVGPSGPPGPPGFPGDPGPPGPAGLPGIPGIDGIRGPPGTVIMMPFQFAGGSFKGPPVSFQQAQAQAVLQQTQLSMKGPPGPVGLTGRPGPVGLPGHPGLKGEEGAEGPQGPRGLQGPHGPPGRVGKMGRPGADGARGLPGDTGPKGDRGFDGLPGLPGEKGQRGDFGHVGQPGPPGEDGERGAEGPPGPTGQAGEPGPRGLLGPRGSPGPTGRPGVTGIDGAPGAKGNVGPPGEPGPPGQQGNHGSQGLPGPQGLIGTPGEKGPPGNPGIPGLPGSDGPLGHPGHEGPTGEKGAQGPPGSAGPPGYPGPRGVKGTSGNRGLQGEKGEKGEDGFPGFKGDVGLKGDQGKPGAPGPRGEDGPEGPKGQAGQAGEEGPPGSAGEKGKLGVPGLPGYPGRPGPKGSIGFPGPLGPIGEKGKSGKTGQPGLEGERGPPGSRGERGQPGATGQPGPKGDVGQDGAPGIPGEKGLPGLQGPPGFPGPKGPPGHQGKDGRPGHPGQRGELGFQGQTGPPGPAGVLGPQGKTGEVGPLGERGPPGPPGPPGEQGLPGLEGREGAKGELGPPGPLGKEGPAGLRGFPGPKGGPGDPGPTGLKGDKGPPGPVGANGSPGERGPLGPAGGIGLPGQSGSEGPVGPAGKKGSRGERGPPGPTGKDGIPGPLGPLGPPGAAGPSGEEGDKGDVGAPGHKGSKGDKGDAGPPGQPGIRGPAGHPGPPGADGAQGRRGPPGLFGQKGDDGVRGFVGVIGPPGLQGLPGPPGEKGEVGDVGSMGPHGAPGPRGPQGPTGSEGTPGLPGGVGQPGAVGEKGERGDAGDPGPPGAPGIPGPKGDIGEKGDSGPSGAAGPPGKKGPPGEDGAKGSVGPTGLPGDLGPPGDPGVSGIDGSPGEKGDPGDVGGPGPPGASGEPGAPGPPGKRGPSGHMGREGREGEKGAKGEPGPDGPPGRTGPMGARGPPGRVGPEGLRGIPGPVGEPGLLGAPGQMGPPGPLGPSGLPGLKGDTGPKGEKGHIGLIGLIGPPGEAGEKGDQGLPGVQGPPGPKGDPGPPGPIGSLGHPGPPGVAGPLGQKGSKGSPGSMGPRGDTGPAGPPGPPGAPAELHGLRRRRRFVPVPLPVVEGGLEEVLASLTSLSLELEQLRRPPGTAERPGLVCHELHRNHPHLPDGEYWIDPNQGCARDSFRVFCNFTAGGETCLYPDKKFEIVKLASWSKEKPGGWYSTFRRGKKFSYVDADGSPVNVVQLNFLKLLSATARQNFTYSCQNAAAWLDEATGDYSHSARFLGTNGEELSFNQTTAATVSVPQDGCRLRKGQTKTLFEFSSSRAGFLPLWDVAATDFGQTNQKFGFELGPVCFSS.

A signal peptide spans 1 to 29; that stretch reads MGNRRDLGQPRAGLCLLLAALQLLPGTQA. The region spanning 62 to 224 is the Laminin G-like domain; that stretch reads DRAFRIGQAS…QACERYLPDC (163 aa). N-linked (GlcNAc...) asparagine glycosylation is found at Asn-102 and Asn-141. A nonhelical region region spans residues 211 to 391; sequence QAAFQACERY…AVIEKGQQFE (181 aa). 4 disordered regions span residues 230 to 304, 322 to 362, 387 to 439, and 476 to 1492; these read AATV…TPTP, RSLD…EYPS, GQQF…RGPP, and SMKG…PAEL. Residues 244–267 are compositionally biased toward basic residues; the sequence is PRRKGKGKGRKKGRGRKGKGRKKN. O-linked (Xyl...) (chondroitin sulfate) serine glycosylation occurs at Ser-349. Collagen-like domains follow at residues 391 to 440 and 482 to 538; these read EGPP…GPPG and GPVG…DGAR. A triple-helical region region spans residues 392 to 1489; that stretch reads GPPGAPGPQG…AGPPGPPGAP (1098 aa). Pro residues predominate over residues 406 to 424; that stretch reads SGPPGPPGFPGDPGPPGPA. 3 stretches are compositionally biased toward low complexity: residues 426–439, 489–499, and 597–619; these read LPGIPGIDGIRGPP, RPGPVGLPGHP, and EPGPRGLLGPRGSPGPTGRPGVT. The segment covering 724 to 733 has biased composition (basic and acidic residues); that stretch reads QGEKGEKGED. The span at 765–792 shows a compositional bias: low complexity; that stretch reads PKGQAGQAGEEGPPGSAGEKGKLGVPGL. Collagen-like domains are found at residues 824-877, 905-950, and 951-989; these read GQPG…QGPP, GFQG…GLPG, and LEGREGAKGELGPPGPLGKEGPAGLRGFPGPKGGPGDPG. A compositionally biased stretch (low complexity) spans 967-979; sequence LGKEGPAGLRGFP. A compositionally biased stretch (gly residues) spans 1016–1025; that stretch reads GPAGGIGLPG. Low complexity-rich tracts occupy residues 1116–1126 and 1141–1152; these read ADGAQGRRGPP and VGVIGPPGLQGL. Residues 1190–1199 are compositionally biased toward gly residues; sequence GLPGGVGQPG. Positions 1213 to 1222 are enriched in pro residues; that stretch reads PGPPGAPGIP. Over residues 1234-1243 the composition is skewed to low complexity; it reads SGPSGAAGPP. Over residues 1318-1330 the composition is skewed to basic and acidic residues; that stretch reads MGREGREGEKGAK. A compositionally biased stretch (low complexity) spans 1405 to 1416; sequence IGLIGLIGPPGE. The span at 1429–1443 shows a compositional bias: pro residues; sequence QGPPGPKGDPGPPGP. The 59-residue stretch at 1430–1488 folds into the Collagen-like 6 domain; that stretch reads GPPGPKGDPGPPGPIGSLGHPGPPGVAGPLGQKGSKGSPGSMGPRGDTGPAGPPGPPGA. A compositionally biased stretch (low complexity) spans 1458 to 1479; that stretch reads PLGQKGSKGSPGSMGPRGDTGP. The region spanning 1514-1744 is the Fibrillar collagen NC1 domain; sequence EEVLASLTSL…GFELGPVCFS (231 aa). 2 disulfide bridges follow: Cys-1585–Cys-1742 and Cys-1651–Cys-1696.

It belongs to the fibrillar collagen family. In terms of assembly, trimers of two alpha 1(V) and one alpha 2(V) chains in most tissues and trimers of one alpha 1(V), one alpha 2(V), and one alpha 3(V) chains in placenta. Prolines at the third position of the tripeptide repeating unit (G-X-Y) are hydroxylated in some or all of the chains. As to expression, detected in fibroblasts (at protein level). Detected in urine (at protein level).

It localises to the secreted. The protein resides in the extracellular space. Its subcellular location is the extracellular matrix. Its function is as follows. Type V collagen is a member of group I collagen (fibrillar forming collagen). It is a minor connective tissue component of nearly ubiquitous distribution. Type V collagen binds to DNA, heparan sulfate, thrombospondin, heparin, and insulin. The chain is Collagen alpha-3(V) chain (COL5A3) from Homo sapiens (Human).